Here is a 521-residue protein sequence, read N- to C-terminus: Apolipoprotein N-acyltransferase (521 aa).

Transmembrane regions (helical) follow at residues 34-54 (LAAP…PLLV), 64-84 (AFWL…RWLL), 100-120 (LAIA…VIGL), 137-157 (LFAV…ETAF), 176-196 (VALG…ALVA), and 206-226 (YAGL…WQLA). The CN hydrolase domain occupies 240 to 480 (IQGNIAQARK…YAAFVEPVRL (241 aa)). Glutamate 281 functions as the Proton acceptor in the catalytic mechanism. Lysine 341 is a catalytic residue. Cysteine 392 functions as the Nucleophile in the catalytic mechanism. Residues 488 to 508 (ALWGDWFVPLSAALALLGLIA) traverse the membrane as a helical segment.

This sequence belongs to the CN hydrolase family. Apolipoprotein N-acyltransferase subfamily.

It is found in the cell inner membrane. It carries out the reaction N-terminal S-1,2-diacyl-sn-glyceryl-L-cysteinyl-[lipoprotein] + a glycerophospholipid = N-acyl-S-1,2-diacyl-sn-glyceryl-L-cysteinyl-[lipoprotein] + a 2-acyl-sn-glycero-3-phospholipid + H(+). The protein operates within protein modification; lipoprotein biosynthesis (N-acyl transfer). In terms of biological role, catalyzes the phospholipid dependent N-acylation of the N-terminal cysteine of apolipoprotein, the last step in lipoprotein maturation. In Gloeobacter violaceus (strain ATCC 29082 / PCC 7421), this protein is Apolipoprotein N-acyltransferase.